Consider the following 360-residue polypeptide: CFA/I fimbrial subunit E (360 aa).

The protein localises to the fimbrium. The sequence is that of CFA/I fimbrial subunit E (cfaE) from Escherichia coli.